The chain runs to 272 residues: Phosphate import ATP-binding protein PstB (272 aa).

Residues 20 to 267 enclose the ABC transporter domain; it reads VKKEVVYETN…PADQRTADYI (248 aa). An ATP-binding site is contributed by 58–65; the sequence is GPSGCGKS.

The protein belongs to the ABC transporter superfamily. Phosphate importer (TC 3.A.1.7) family. As to quaternary structure, the complex is composed of two ATP-binding proteins (PstB), two transmembrane proteins (PstC and PstA) and a solute-binding protein (PstS).

It localises to the cell membrane. It carries out the reaction phosphate(out) + ATP + H2O = ADP + 2 phosphate(in) + H(+). Its function is as follows. Part of the ABC transporter complex PstSACB involved in phosphate import. Responsible for energy coupling to the transport system. The sequence is that of Phosphate import ATP-binding protein PstB from Geobacillus kaustophilus (strain HTA426).